Consider the following 157-residue polypeptide: Large ribosomal subunit protein uL11 (157 aa).

Belongs to the universal ribosomal protein uL11 family. Part of the ribosomal stalk of the 50S ribosomal subunit. Interacts with L10 and the large rRNA to form the base of the stalk. L10 forms an elongated spine to which L12 dimers bind in a sequential fashion forming a multimeric L10(L12)X complex.

Forms part of the ribosomal stalk which helps the ribosome interact with GTP-bound translation factors. This is Large ribosomal subunit protein uL11 from Archaeoglobus fulgidus (strain ATCC 49558 / DSM 4304 / JCM 9628 / NBRC 100126 / VC-16).